Here is a 251-residue protein sequence, read N- to C-terminus: Triosephosphate isomerase (251 aa).

9 to 11 (NWK) provides a ligand contact to substrate. The active-site Electrophile is His95. The Proton acceptor role is filled by Glu167. Substrate-binding positions include Gly173, Ser212, and 233–234 (GG).

This sequence belongs to the triosephosphate isomerase family. In terms of assembly, homodimer.

Its subcellular location is the cytoplasm. It carries out the reaction D-glyceraldehyde 3-phosphate = dihydroxyacetone phosphate. It participates in carbohydrate biosynthesis; gluconeogenesis. The protein operates within carbohydrate degradation; glycolysis; D-glyceraldehyde 3-phosphate from glycerone phosphate: step 1/1. Its function is as follows. Involved in the gluconeogenesis. Catalyzes stereospecifically the conversion of dihydroxyacetone phosphate (DHAP) to D-glyceraldehyde-3-phosphate (G3P). In Pseudomonas savastanoi pv. phaseolicola (strain 1448A / Race 6) (Pseudomonas syringae pv. phaseolicola (strain 1448A / Race 6)), this protein is Triosephosphate isomerase.